The following is a 229-amino-acid chain: Potassium/proton antiporter CemA (229 aa).

Transmembrane regions (helical) follow at residues 7-27, 107-127, and 189-209; these read FTPL…SLSF, ILHF…SLLG, and IISG…KYWI.

Belongs to the CemA family.

It is found in the plastid. The protein resides in the chloroplast inner membrane. The enzyme catalyses K(+)(in) + H(+)(out) = K(+)(out) + H(+)(in). Contributes to K(+)/H(+) antiport activity by supporting proton efflux to control proton extrusion and homeostasis in chloroplasts in a light-dependent manner to modulate photosynthesis. Prevents excessive induction of non-photochemical quenching (NPQ) under continuous-light conditions. Indirectly promotes efficient inorganic carbon uptake into chloroplasts. This is Potassium/proton antiporter CemA from Lactuca sativa (Garden lettuce).